Here is a 237-residue protein sequence, read N- to C-terminus: Riboflavin kinase (237 aa).

The disordered stretch occupies residues 1–23 (MSLPNPDNRPLLIGPPTGPEAPF). Positions 46 and 48 each coordinate Mg(2+). Residues 82-126 (VLYQKPPTSEPVMMDPVQQQQQQQQQQRNQQQQQEGGVGSAQQEK) are disordered. Over residues 99 to 115 (QQQQQQQQQQRNQQQQQ) the composition is skewed to low complexity. The active-site Nucleophile is Glu158.

The protein belongs to the flavokinase family. Requires Zn(2+) as cofactor. Mg(2+) is required as a cofactor.

The catalysed reaction is riboflavin + ATP = FMN + ADP + H(+). The protein operates within cofactor biosynthesis; FMN biosynthesis; FMN from riboflavin (ATP route): step 1/1. Catalyzes the phosphorylation of riboflavin (vitamin B2) to form flavin mononucleotide (FMN) coenzyme. This chain is Riboflavin kinase (fmn1), found in Neurospora crassa (strain ATCC 24698 / 74-OR23-1A / CBS 708.71 / DSM 1257 / FGSC 987).